A 238-amino-acid chain; its full sequence is Sugar fermentation stimulation protein homolog (238 aa).

Belongs to the SfsA family.

In Brucella melitensis biotype 1 (strain ATCC 23456 / CCUG 17765 / NCTC 10094 / 16M), this protein is Sugar fermentation stimulation protein homolog.